The primary structure comprises 640 residues: 1,4-alpha-glucan branching enzyme GlgB (640 aa).

Asp318 serves as the catalytic Nucleophile. Glu371 (proton donor) is an active-site residue.

Belongs to the glycosyl hydrolase 13 family. GlgB subfamily. In terms of assembly, monomer.

The catalysed reaction is Transfers a segment of a (1-&gt;4)-alpha-D-glucan chain to a primary hydroxy group in a similar glucan chain.. The protein operates within glycan biosynthesis; glycogen biosynthesis. Functionally, catalyzes the formation of the alpha-1,6-glucosidic linkages in glycogen by scission of a 1,4-alpha-linked oligosaccharide from growing alpha-1,4-glucan chains and the subsequent attachment of the oligosaccharide to the alpha-1,6 position. The chain is 1,4-alpha-glucan branching enzyme GlgB from Francisella tularensis subsp. novicida (strain U112).